A 57-amino-acid chain; its full sequence is Large ribosomal subunit protein bL32 (57 aa).

Residues 1–21 form a disordered region; it reads MAVPKRRTSKKVKNQRRTHKK.

This sequence belongs to the bacterial ribosomal protein bL32 family.

The sequence is that of Large ribosomal subunit protein bL32 from Oceanobacillus iheyensis (strain DSM 14371 / CIP 107618 / JCM 11309 / KCTC 3954 / HTE831).